Here is a 403-residue protein sequence, read N- to C-terminus: CCA-adding enzyme (403 aa).

ATP contacts are provided by glycine 32 and arginine 35. CTP contacts are provided by glycine 32 and arginine 35. Mg(2+) is bound by residues aspartate 45 and aspartate 47. Residues arginine 116, aspartate 159, arginine 162, arginine 165, and arginine 168 each coordinate ATP. Residues arginine 116, aspartate 159, arginine 162, arginine 165, and arginine 168 each contribute to the CTP site.

This sequence belongs to the tRNA nucleotidyltransferase/poly(A) polymerase family. Bacterial CCA-adding enzyme type 3 subfamily. In terms of assembly, homodimer. Mg(2+) serves as cofactor.

The catalysed reaction is a tRNA precursor + 2 CTP + ATP = a tRNA with a 3' CCA end + 3 diphosphate. It catalyses the reaction a tRNA with a 3' CCA end + 2 CTP + ATP = a tRNA with a 3' CCACCA end + 3 diphosphate. Catalyzes the addition and repair of the essential 3'-terminal CCA sequence in tRNAs without using a nucleic acid template. Adds these three nucleotides in the order of C, C, and A to the tRNA nucleotide-73, using CTP and ATP as substrates and producing inorganic pyrophosphate. tRNA 3'-terminal CCA addition is required both for tRNA processing and repair. Also involved in tRNA surveillance by mediating tandem CCA addition to generate a CCACCA at the 3' terminus of unstable tRNAs. While stable tRNAs receive only 3'-terminal CCA, unstable tRNAs are marked with CCACCA and rapidly degraded. This chain is CCA-adding enzyme, found in Limosilactobacillus reuteri (strain DSM 20016) (Lactobacillus reuteri).